The primary structure comprises 352 residues: Putative [LysW]-L-2-aminoadipate/[LysW]-L-glutamate phosphate reductase (352 aa).

Residues 10–13 and 34–36 each bind NADP(+); these read SGFT and SRK. Cys151 is a catalytic residue. Residue Asn319 participates in NADP(+) binding.

The protein belongs to the NAGSA dehydrogenase family. Type 1 subfamily. LysY sub-subfamily.

The protein localises to the cytoplasm. The catalysed reaction is [amino-group carrier protein]-C-terminal-N-(1-carboxy-5-oxopentan-1-yl)-L-glutamine + phosphate + NADP(+) = [amino-group carrier protein]-C-terminal-N-(1-carboxy-5-phosphooxy-5-oxopentan-1-yl)-L-glutamine + NADPH + H(+). The enzyme catalyses [amino-group carrier protein]-C-terminal-gamma-(L-glutamyl-5-semialdehyde)-L-glutamate + phosphate + NADP(+) = [amino-group carrier protein]-C-terminal-gamma-(5-phospho-L-glutamyl)-L-glutamate + NADPH + H(+). The protein operates within amino-acid biosynthesis; L-lysine biosynthesis via AAA pathway; L-lysine from L-alpha-aminoadipate (Thermus route): step 3/5. Its pathway is amino-acid biosynthesis; L-arginine biosynthesis. Its function is as follows. Involved in both the arginine and lysine biosynthetic pathways. The protein is Putative [LysW]-L-2-aminoadipate/[LysW]-L-glutamate phosphate reductase of Pyrobaculum neutrophilum (strain DSM 2338 / JCM 9278 / NBRC 100436 / V24Sta) (Thermoproteus neutrophilus).